Consider the following 392-residue polypeptide: Putative glutamate--cysteine ligase 2 (392 aa).

The disordered stretch occupies residues 347–367; that stretch reads AARKHGAAPEPGTRTRGDDGV.

This sequence belongs to the glutamate--cysteine ligase type 2 family. YbdK subfamily.

The enzyme catalyses L-cysteine + L-glutamate + ATP = gamma-L-glutamyl-L-cysteine + ADP + phosphate + H(+). Functionally, ATP-dependent carboxylate-amine ligase which exhibits weak glutamate--cysteine ligase activity. The sequence is that of Putative glutamate--cysteine ligase 2 from Corynebacterium jeikeium (strain K411).